The chain runs to 650 residues: MTPILTVLICLGLSLGPRTHVQAGHLPKPTLWAEPGSVITQGSPVTLRCQGGQETQEYRLYREKKTALWITRIPQELVKKGQFPIPSITWEHAGRYRCYYGSDTAGRSESSDPLELVVTGAYIKPTLSAQPSPVVNSGGNVILQCDSQVAFDGFSLCKEGEDEHPQCLNSQPHARGSSRAIFSVGPVSPSRRWWYRCYAYDSNSPYEWSLPSDLLELLVLGVSKKPSLSVQPGPIVAPEETLTLQCGSDAGYNRFVLYKDGERDFLQLAGAQPQAGLSQANFTLGPVSRSYGGQYRCYGAHNLSSEWSAPSDPLDILIAGQFYDRVSLSVQPGPTVASGENVTLLCQSQGWMQTFLLTKEGAADDPWRLRSTYQSQKYQAEFPMGPVTSAHAGTYRCYGSQSSKPYLLTHPSDPLELVVSGPSGGPSSPTTGPTSTSGPEDQPLTPTGSDPQSGLGRHLGVVIGILVAVILLLLLLLLLFLILRHRRQGKHWTSTQRKADFQHPAGAVGPEPTDRGLQWRSSPAADAQEENLYAAVKHTQPEDGVEMDTRSPHDEDPQAVTYAEVKHSRPRREMASPPSPLSGEFLDTKDRQAEEDRQMDTEAAASEAPQDVTYAQLHSLTLRREATEPPPSQEGPSPAVPSIYATLAIH.

The signal sequence occupies residues 1-23 (MTPILTVLICLGLSLGPRTHVQA). The Extracellular portion of the chain corresponds to 24–461 (GHLPKPTLWA…QSGLGRHLGV (438 aa)). Ig-like C2-type domains are found at residues 27-115 (PKPT…DPLE), 116-221 (LVVT…LVLG), 222-312 (VSKK…APSD), and 313-409 (PLDI…YLLT). 4 disulfides stabilise this stretch: C49/C98, C145/C197, C157/C167, and C246/C297. 3 N-linked (GlcNAc...) asparagine glycosylation sites follow: N281, N302, and N341. Cysteines 346 and 397 form a disulfide. Positions 415 to 451 (LELVVSGPSGGPSSPTTGPTSTSGPEDQPLTPTGSDP) are disordered. Over residues 425–439 (GPSSPTTGPTSTSGP) the composition is skewed to low complexity. Residues 462 to 482 (VIGILVAVILLLLLLLLLFLI) form a helical membrane-spanning segment. Topologically, residues 483-650 (LRHRRQGKHW…PSIYATLAIH (168 aa)) are cytoplasmic. The interval 491–524 (HWTSTQRKADFQHPAGAVGPEPTDRGLQWRSSPA) is disordered. Short sequence motifs (ITIM motif) lie at residues 531–536 (NLYAAV) and 560–565 (VTYAEV). The residue at position 533 (Y533) is a Phosphotyrosine. The disordered stretch occupies residues 563–650 (AEVKHSRPRR…PSIYATLAIH (88 aa)). Basic and acidic residues-rich tracts occupy residues 564 to 574 (EVKHSRPRREM) and 586 to 600 (LDTK…RQMD). 2 consecutive short sequence motifs (ITIM motif) follow at residues 612-617 (VTYAQL) and 642-647 (SIYATL). 2 positions are modified to phosphotyrosine: Y614 and Y644.

Binds PTPN6 when phosphorylated. Binds FCER1A and FCGR1A. Interacts with human cytomegalovirus/HHV-5 protein UL18. Interacts with peptide-bound HLA-G-B2M complex. Interacts with peptide-bound HLA-F-B2M complex but not with peptide-free HLA-F open conformer. It does not probe the peptide sequence directly. In terms of processing, phosphorylated on tyrosine residues. Dephosphorylated by PTPN6. As to expression, expressed in B cells, monocytes and various dendritic cell (DC) subsets including myeloid, plasmacytoid and tolerogenic DCs (at protein level). Expressed in decidual macrophages (at protein level). Expressed in decidual NK cells (at protein level).

The protein localises to the cell membrane. It is found in the secreted. Functionally, receptor for class I MHC antigens. Recognizes a broad spectrum of HLA-A, HLA-B, HLA-C, HLA-G and HLA-F alleles. Receptor for H301/UL18, a human cytomegalovirus class I MHC homolog. Ligand binding results in inhibitory signals and down-regulation of the immune response. Engagement of LILRB1 present on natural killer cells or T-cells by class I MHC molecules protects the target cells from lysis. Interaction with HLA-B or HLA-E leads to inhibition of FCER1A signaling and serotonin release. Inhibits FCGR1A-mediated phosphorylation of cellular proteins and mobilization of intracellular calcium ions. Recognizes HLA-G in complex with B2M/beta-2 microglobulin and a nonamer self-peptide. Upon interaction with peptide-bound HLA-G-B2M complex, triggers secretion of growth-promoting factors by decidual NK cells. Reprograms B cells toward an immune suppressive phenotype. This chain is Leukocyte immunoglobulin-like receptor subfamily B member 1, found in Homo sapiens (Human).